Here is a 392-residue protein sequence, read N- to C-terminus: ATP phosphoribosyltransferase regulatory subunit (392 aa).

The protein belongs to the class-II aminoacyl-tRNA synthetase family. HisZ subfamily. As to quaternary structure, heteromultimer composed of HisG and HisZ subunits.

The protein resides in the cytoplasm. Its pathway is amino-acid biosynthesis; L-histidine biosynthesis; L-histidine from 5-phospho-alpha-D-ribose 1-diphosphate: step 1/9. In terms of biological role, required for the first step of histidine biosynthesis. May allow the feedback regulation of ATP phosphoribosyltransferase activity by histidine. The protein is ATP phosphoribosyltransferase regulatory subunit of Marinomonas sp. (strain MWYL1).